We begin with the raw amino-acid sequence, 448 residues long: ATP-dependent protease ATPase subunit HslU (448 aa).

Residues Val21, Gly63 to Glu68, Asp260, Glu326, and Arg398 contribute to the ATP site.

The protein belongs to the ClpX chaperone family. HslU subfamily. A double ring-shaped homohexamer of HslV is capped on each side by a ring-shaped HslU homohexamer. The assembly of the HslU/HslV complex is dependent on binding of ATP.

Its subcellular location is the cytoplasm. Functionally, ATPase subunit of a proteasome-like degradation complex; this subunit has chaperone activity. The binding of ATP and its subsequent hydrolysis by HslU are essential for unfolding of protein substrates subsequently hydrolyzed by HslV. HslU recognizes the N-terminal part of its protein substrates and unfolds these before they are guided to HslV for hydrolysis. This Sulfurihydrogenibium sp. (strain YO3AOP1) protein is ATP-dependent protease ATPase subunit HslU.